The chain runs to 920 residues: Isoleucine--tRNA ligase (920 aa).

The short motif at 58-68 (PYANGHLHLGH) is the 'HIGH' region element. Glu569 is a binding site for L-isoleucyl-5'-AMP. The 'KMSKS' region motif lies at 610 to 614 (KMSKS). ATP is bound at residue Lys613. Zn(2+) contacts are provided by Cys895, Cys898, Cys910, and Cys913.

The protein belongs to the class-I aminoacyl-tRNA synthetase family. IleS type 1 subfamily. Monomer. Zn(2+) serves as cofactor.

It is found in the cytoplasm. The catalysed reaction is tRNA(Ile) + L-isoleucine + ATP = L-isoleucyl-tRNA(Ile) + AMP + diphosphate. Its function is as follows. Catalyzes the attachment of isoleucine to tRNA(Ile). As IleRS can inadvertently accommodate and process structurally similar amino acids such as valine, to avoid such errors it has two additional distinct tRNA(Ile)-dependent editing activities. One activity is designated as 'pretransfer' editing and involves the hydrolysis of activated Val-AMP. The other activity is designated 'posttransfer' editing and involves deacylation of mischarged Val-tRNA(Ile). The chain is Isoleucine--tRNA ligase from Helicobacter pylori (strain P12).